The sequence spans 158 residues: Probable inactive acireductone dioxygenase 2 (158 aa).

Belongs to the acireductone dioxygenase (ARD) family.

The protein localises to the cytoplasm. It localises to the nucleus. Probable inactive acireductone dioxygenase. In Caenorhabditis elegans, this protein is Probable inactive acireductone dioxygenase 2.